The sequence spans 255 residues: MEIIPAIDLLDSACVRLHQGDYAKVTRFSEDPVAQALSWQKQGATRLHLVDLDGAKSGEPVNDSCVRAITSALNIPVQLGGGVRTLERAEELLAYGLEQVILGTVAIEQPQLVKQLAQRNPGRIIVGIDAKNGKVATRGWISQSEVNATDLAADFNAAGIAAIISTDIATDGTLEGPNLESLRAMANASSVPLIASGGVGCMADLLSLLALEPYGVSGVIVGRALYDGKVDLKEAIRAIGDGRLQDPPSSKPLMA.

Asp-8 (proton acceptor) is an active-site residue. Asp-129 acts as the Proton donor in catalysis.

This sequence belongs to the HisA/HisF family.

The protein resides in the cytoplasm. It carries out the reaction 1-(5-phospho-beta-D-ribosyl)-5-[(5-phospho-beta-D-ribosylamino)methylideneamino]imidazole-4-carboxamide = 5-[(5-phospho-1-deoxy-D-ribulos-1-ylimino)methylamino]-1-(5-phospho-beta-D-ribosyl)imidazole-4-carboxamide. It participates in amino-acid biosynthesis; L-histidine biosynthesis; L-histidine from 5-phospho-alpha-D-ribose 1-diphosphate: step 4/9. The polypeptide is 1-(5-phosphoribosyl)-5-[(5-phosphoribosylamino)methylideneamino] imidazole-4-carboxamide isomerase (Prochlorococcus marinus (strain MIT 9303)).